The following is a 245-amino-acid chain: 3-deoxy-manno-octulosonate cytidylyltransferase (245 aa).

This sequence belongs to the KdsB family.

Its subcellular location is the cytoplasm. It catalyses the reaction 3-deoxy-alpha-D-manno-oct-2-ulosonate + CTP = CMP-3-deoxy-beta-D-manno-octulosonate + diphosphate. It functions in the pathway nucleotide-sugar biosynthesis; CMP-3-deoxy-D-manno-octulosonate biosynthesis; CMP-3-deoxy-D-manno-octulosonate from 3-deoxy-D-manno-octulosonate and CTP: step 1/1. Its pathway is bacterial outer membrane biogenesis; lipopolysaccharide biosynthesis. Its function is as follows. Activates KDO (a required 8-carbon sugar) for incorporation into bacterial lipopolysaccharide in Gram-negative bacteria. This chain is 3-deoxy-manno-octulosonate cytidylyltransferase, found in Rhodopseudomonas palustris (strain ATCC BAA-98 / CGA009).